A 422-amino-acid polypeptide reads, in one-letter code: Tryptophan synthase beta chain 2 (422 aa).

Lys-111 is subject to N6-(pyridoxal phosphate)lysine.

This sequence belongs to the TrpB family. As to quaternary structure, tetramer of two alpha and two beta chains. The cofactor is pyridoxal 5'-phosphate.

It carries out the reaction (1S,2R)-1-C-(indol-3-yl)glycerol 3-phosphate + L-serine = D-glyceraldehyde 3-phosphate + L-tryptophan + H2O. The protein operates within amino-acid biosynthesis; L-tryptophan biosynthesis; L-tryptophan from chorismate: step 5/5. Functionally, the beta subunit is responsible for the synthesis of L-tryptophan from indole and L-serine. In Thermotoga maritima (strain ATCC 43589 / DSM 3109 / JCM 10099 / NBRC 100826 / MSB8), this protein is Tryptophan synthase beta chain 2 (trpB2).